An 885-amino-acid polypeptide reads, in one-letter code: Alanine--tRNA ligase (885 aa).

Histidine 574, histidine 578, cysteine 685, and histidine 689 together coordinate Zn(2+).

This sequence belongs to the class-II aminoacyl-tRNA synthetase family. It depends on Zn(2+) as a cofactor.

It localises to the cytoplasm. It carries out the reaction tRNA(Ala) + L-alanine + ATP = L-alanyl-tRNA(Ala) + AMP + diphosphate. Functionally, catalyzes the attachment of alanine to tRNA(Ala) in a two-step reaction: alanine is first activated by ATP to form Ala-AMP and then transferred to the acceptor end of tRNA(Ala). Also edits incorrectly charged Ser-tRNA(Ala) and Gly-tRNA(Ala) via its editing domain. In Deinococcus geothermalis (strain DSM 11300 / CIP 105573 / AG-3a), this protein is Alanine--tRNA ligase.